Consider the following 499-residue polypeptide: Anaerobic magnesium-protoporphyrin IX monomethyl ester cyclase (499 aa).

The B12-binding domain occupies 9–145 (PHPAIGSRIP…AALENHNDLN (137 aa)). Positions 188–420 (YGGKQAVVIQ…PPWRIFLWVK (233 aa)) constitute a Radical SAM core domain. Residues C202, C206, and C209 each coordinate [4Fe-4S] cluster.

The protein belongs to the BchE family. It depends on [4Fe-4S] cluster as a cofactor. Adenosylcob(III)alamin is required as a cofactor.

It catalyses the reaction Mg-protoporphyrin IX 13-monomethyl ester + 3 S-adenosyl-L-methionine + H2O = 3,8-divinyl protochlorophyllide a + 3 5'-deoxyadenosine + 3 L-methionine + 4 H(+). It participates in porphyrin-containing compound metabolism; bacteriochlorophyll biosynthesis (light-independent). Its function is as follows. Involved in the tetrapyrrole biosynthetic pathways leading to chlorophyll and bacteriochlorophyll (BChl). Catalyzes the anaerobic formation of the isocyclic ring (E-ring) in Mg-protoporphyrin monomethyl ester (MPE) to yield protochlorophyllide a (PChlide a) via a six-electron oxidation and the formation of an oxo group at position C13 using oxygen from a water molecule. The sequence is that of Anaerobic magnesium-protoporphyrin IX monomethyl ester cyclase from Synechocystis sp. (strain ATCC 27184 / PCC 6803 / Kazusa).